Here is a 334-residue protein sequence, read N- to C-terminus: Flavonol synthase/flavanone 3-hydroxylase (334 aa).

The region spanning 196 to 295 is the Fe2OG dioxygenase domain; sequence DLVYLMKINY…RMSWPVFLEP (100 aa). Residues His-220, Asp-222, and His-276 each coordinate Fe cation.

Belongs to the iron/ascorbate-dependent oxidoreductase family. Requires Fe cation as cofactor. It depends on L-ascorbate as a cofactor.

Its subcellular location is the cytoplasm. The catalysed reaction is a (2R,3R)-dihydroflavonol + 2-oxoglutarate + O2 = a flavonol + succinate + CO2 + H2O. It catalyses the reaction a (2S)-flavan-4-one + 2-oxoglutarate + O2 = a (2R,3R)-dihydroflavonol + succinate + CO2. The protein operates within secondary metabolite biosynthesis; flavonoid biosynthesis. Catalyzes the formation of flavonols from dihydroflavonols. It can act on dihydrokaempferol to produce kaempferol, on dihydroquercetin to produce quercitin and on dihydromyricetin to produce myricetin. The protein is Flavonol synthase/flavanone 3-hydroxylase (FLS) of Eustoma exaltatum subsp. russellianum (Bluebells).